The chain runs to 521 residues: Ribonuclease Y (521 aa).

The helical transmembrane segment at 5–25 (LLLILTAVIMLIVGFAVGAIL) threads the bilayer. The segment at 77–107 (ELKDRRGEVQKQENRLIQREETMDRKDATLD) is disordered. Residues 211-271 (TVTVVTLPND…IRREIARMTL (61 aa)) enclose the KH domain. The HD domain occupies 337-430 (VLNHSIEVAK…VAASDAISAA (94 aa)).

This sequence belongs to the RNase Y family.

Its subcellular location is the cell membrane. Its function is as follows. Endoribonuclease that initiates mRNA decay. The protein is Ribonuclease Y of Latilactobacillus sakei subsp. sakei (strain 23K) (Lactobacillus sakei subsp. sakei).